Here is an 876-residue protein sequence, read N- to C-terminus: Phosphoenolpyruvate carboxylase (876 aa).

Catalysis depends on residues histidine 138 and lysine 543.

Belongs to the PEPCase type 1 family. It depends on Mg(2+) as a cofactor.

It catalyses the reaction oxaloacetate + phosphate = phosphoenolpyruvate + hydrogencarbonate. Forms oxaloacetate, a four-carbon dicarboxylic acid source for the tricarboxylic acid cycle. The protein is Phosphoenolpyruvate carboxylase of Aliivibrio salmonicida (strain LFI1238) (Vibrio salmonicida (strain LFI1238)).